The primary structure comprises 406 residues: Tyrosine--tRNA ligase (406 aa).

Y35 serves as a coordination point for L-tyrosine. The short motif at P40–H49 is the 'HIGH' region element. L-tyrosine contacts are provided by Y168 and Q172. Positions K228–T232 match the 'KMSKS' region motif. K231 is a binding site for ATP. Residues A340–V404 enclose the S4 RNA-binding domain.

This sequence belongs to the class-I aminoacyl-tRNA synthetase family. TyrS type 1 subfamily. As to quaternary structure, homodimer.

It is found in the cytoplasm. It carries out the reaction tRNA(Tyr) + L-tyrosine + ATP = L-tyrosyl-tRNA(Tyr) + AMP + diphosphate + H(+). Its function is as follows. Catalyzes the attachment of tyrosine to tRNA(Tyr) in a two-step reaction: tyrosine is first activated by ATP to form Tyr-AMP and then transferred to the acceptor end of tRNA(Tyr). This Clostridium perfringens (strain 13 / Type A) protein is Tyrosine--tRNA ligase.